The chain runs to 153 residues: Small ribosomal subunit protein uS19 (153 aa).

A unknown region spans residues 1-63 (MGFRGAWNKR…QEIWDEFRAF (63 aa)). A small ribosomal subunit protein uS19 region spans residues 64-153 (VNKKAWVDPK…EKSAKVVKKK (90 aa)).

The protein belongs to the universal ribosomal protein uS19 family.

In terms of biological role, protein S19 forms a complex with S13 that binds strongly to the 16S ribosomal RNA. This chain is Small ribosomal subunit protein uS19, found in Hydrogenobaculum sp. (strain Y04AAS1).